The chain runs to 387 residues: Apoptosis-inducing factor homolog B (387 aa).

FAD is bound by residues 12–16 (GGGYG), Arg47, and Asp292.

Belongs to the FAD-dependent oxidoreductase family. FAD is required as a cofactor.

Its function is as follows. Putative FAD-dependent oxidoreductase. The sequence is that of Apoptosis-inducing factor homolog B (aifB) from Dictyostelium discoideum (Social amoeba).